Reading from the N-terminus, the 812-residue chain is Probable inorganic carbon transporter subunit DabA (812 aa).

Residues Cys337, Asp339, His499, and Cys514 each coordinate Zn(2+).

This sequence belongs to the inorganic carbon transporter (TC 9.A.2) DabA family. As to quaternary structure, forms a complex with DabB. Requires Zn(2+) as cofactor.

The protein resides in the cell inner membrane. In terms of biological role, part of an energy-coupled inorganic carbon pump. This chain is Probable inorganic carbon transporter subunit DabA, found in Xanthomonas oryzae pv. oryzae (strain MAFF 311018).